We begin with the raw amino-acid sequence, 209 residues long: Flavin prenyltransferase UbiX (209 aa).

FMN-binding positions include 13–15 (GAS), Ser-39, 104–107 (STGT), Cys-116, and Arg-139. Residues Tyr-169 and Arg-185 each coordinate dimethylallyl phosphate.

Belongs to the UbiX/PAD1 family.

It carries out the reaction dimethylallyl phosphate + FMNH2 = prenylated FMNH2 + phosphate. Its function is as follows. Flavin prenyltransferase that catalyzes the synthesis of the prenylated FMN cofactor (prenyl-FMN) for 4-hydroxy-3-polyprenylbenzoic acid decarboxylase UbiD. The prenyltransferase is metal-independent and links a dimethylallyl moiety from dimethylallyl monophosphate (DMAP) to the flavin N5 and C6 atoms of FMN. The sequence is that of Flavin prenyltransferase UbiX from Pseudomonas aeruginosa (strain ATCC 15692 / DSM 22644 / CIP 104116 / JCM 14847 / LMG 12228 / 1C / PRS 101 / PAO1).